A 38-amino-acid polypeptide reads, in one-letter code: Defensin (38 aa).

3 disulfides stabilise this stretch: Cys4–Cys26, Cys11–Cys34, and Cys15–Cys36.

This sequence belongs to the invertebrate defensin family. Type 2 subfamily.

It localises to the secreted. Its function is as follows. Mediates the inducible antibacterial activity in larvae of A.cyanea. In Aeshna cyanea (Southern hawker dragonfly), this protein is Defensin.